The primary structure comprises 193 residues: Crossover junction endodeoxyribonuclease RuvC (193 aa).

Catalysis depends on residues D7, E68, and D141. Positions 7, 68, and 141 each coordinate Mg(2+).

This sequence belongs to the RuvC family. Homodimer which binds Holliday junction (HJ) DNA. The HJ becomes 2-fold symmetrical on binding to RuvC with unstacked arms; it has a different conformation from HJ DNA in complex with RuvA. In the full resolvosome a probable DNA-RuvA(4)-RuvB(12)-RuvC(2) complex forms which resolves the HJ. Requires Mg(2+) as cofactor.

The protein localises to the cytoplasm. The enzyme catalyses Endonucleolytic cleavage at a junction such as a reciprocal single-stranded crossover between two homologous DNA duplexes (Holliday junction).. Its function is as follows. The RuvA-RuvB-RuvC complex processes Holliday junction (HJ) DNA during genetic recombination and DNA repair. Endonuclease that resolves HJ intermediates. Cleaves cruciform DNA by making single-stranded nicks across the HJ at symmetrical positions within the homologous arms, yielding a 5'-phosphate and a 3'-hydroxyl group; requires a central core of homology in the junction. The consensus cleavage sequence is 5'-(A/T)TT(C/G)-3'. Cleavage occurs on the 3'-side of the TT dinucleotide at the point of strand exchange. HJ branch migration catalyzed by RuvA-RuvB allows RuvC to scan DNA until it finds its consensus sequence, where it cleaves and resolves the cruciform DNA. The chain is Crossover junction endodeoxyribonuclease RuvC from Bifidobacterium adolescentis (strain ATCC 15703 / DSM 20083 / NCTC 11814 / E194a).